Reading from the N-terminus, the 145-residue chain is LIRP (145 aa).

A signal peptide (or 22) is located at residues 1–19; that stretch reads MWKLCLRLLAVLAVCLSTA. 2 consecutive propeptides follow at residues 20 to 33 and 117 to 122; these read TQAQ…SPKR and FRRRTR. 3 disulfide bridges follow: cysteine 44–cysteine 129, cysteine 56–cysteine 142, and cysteine 128–cysteine 133.

The protein belongs to the insulin family. In terms of assembly, heterodimer of a B chain and an A chain linked by two disulfide bonds.

It is found in the secreted. The protein is LIRP of Locusta migratoria (Migratory locust).